The following is a 100-amino-acid chain: NADH-quinone oxidoreductase subunit K (100 aa).

3 helical membrane-spanning segments follow: residues 4–24 (TTWV…GLLS), 28–48 (LLFI…LFIA), and 60–80 (IMYL…LALV).

Belongs to the complex I subunit 4L family. In terms of assembly, NDH-1 is composed of 13 different subunits. Subunits NuoA, H, J, K, L, M, N constitute the membrane sector of the complex.

It localises to the cell inner membrane. It catalyses the reaction a quinone + NADH + 5 H(+)(in) = a quinol + NAD(+) + 4 H(+)(out). Functionally, NDH-1 shuttles electrons from NADH, via FMN and iron-sulfur (Fe-S) centers, to quinones in the respiratory chain. The immediate electron acceptor for the enzyme in this species is believed to be ubiquinone. Couples the redox reaction to proton translocation (for every two electrons transferred, four hydrogen ions are translocated across the cytoplasmic membrane), and thus conserves the redox energy in a proton gradient. The protein is NADH-quinone oxidoreductase subunit K of Shewanella woodyi (strain ATCC 51908 / MS32).